Here is a 250-residue protein sequence, read N- to C-terminus: Homeobox protein DLL-1 (250 aa).

Disordered regions lie at residues 40 to 66 (YPSL…SGSN) and 84 to 106 (SPYL…PDQQ). A compositionally biased stretch (polar residues) spans 84 to 98 (SPYLQSCNSNTTTQS). The homeobox DNA-binding region spans 125–184 (IRKPRTIYSSLQLQALNHRFQQTQYLALPERAELAASLGVTQTQVKIWFQNKRSKYKKLI).

The protein belongs to the distal-less homeobox family.

It localises to the nucleus. In Xenopus laevis (African clawed frog), this protein is Homeobox protein DLL-1 (dll1).